Reading from the N-terminus, the 483-residue chain is NADH-quinone oxidoreductase subunit N (483 aa).

13 consecutive transmembrane segments (helical) span residues 9–29 (LVLP…WGAF), 35–55 (PLFT…AVVG), 69–89 (AAAT…IVLG), 104–124 (AVLV…GDLI), 158–178 (FVLG…IYGF), 201–221 (VGLL…VSAA), 234–254 (APTS…MMMF), 272–292 (VLII…LAQT), 297–317 (LWAY…ATGG), 325–345 (LLFM…LQAL), 368–388 (IAVA…FSGF), 404–424 (VLLQ…AFYY), and 449–469 (AVGF…LIWL).

Belongs to the complex I subunit 2 family. As to quaternary structure, NDH-1 is composed of 14 different subunits. Subunits NuoA, H, J, K, L, M, N constitute the membrane sector of the complex.

The protein resides in the cell inner membrane. The enzyme catalyses a quinone + NADH + 5 H(+)(in) = a quinol + NAD(+) + 4 H(+)(out). Its function is as follows. NDH-1 shuttles electrons from NADH, via FMN and iron-sulfur (Fe-S) centers, to quinones in the respiratory chain. The immediate electron acceptor for the enzyme in this species is believed to be ubiquinone. Couples the redox reaction to proton translocation (for every two electrons transferred, four hydrogen ions are translocated across the cytoplasmic membrane), and thus conserves the redox energy in a proton gradient. The sequence is that of NADH-quinone oxidoreductase subunit N from Caulobacter sp. (strain K31).